We begin with the raw amino-acid sequence, 426 residues long: Cytochrome c biogenesis protein CcsB (426 aa).

Helical transmembrane passes span 14 to 34 (LKIA…GTLI), 72 to 92 (SFWF…CSFR), and 162 to 182 (LGPI…TYGS).

It belongs to the Ccs1/CcsB family. As to quaternary structure, may interact with CcsA.

The protein localises to the cellular thylakoid membrane. Required during biogenesis of c-type cytochromes (cytochrome c6 and cytochrome f) at the step of heme attachment. This is Cytochrome c biogenesis protein CcsB from Prochlorococcus marinus (strain NATL2A).